The chain runs to 100 residues: MELLGEYVGQDGQRQRLRVPCEAPGNADHFQGLLSGVARMKELVAELFGSPVQGEAQDRVAAAPEEALDGDDEDDAEDENNIDNRTNSDGPTAKRPKPPS.

An N-acetylmethionine modification is found at M1. The tract at residues 50–100 (SPVQGEAQDRVAAAPEEALDGDDEDDAEDENNIDNRTNSDGPTAKRPKPPS) is disordered. A compositionally biased stretch (acidic residues) spans 66-81 (EALDGDDEDDAEDENN).

In terms of assembly, component of the EKC/KEOPS complex composed of at least GON7, TP53RK, TPRKB, OSGEP and LAGE3; the whole complex dimerizes.

The protein localises to the nucleus. Component of the EKC/KEOPS complex that is required for the formation of a threonylcarbamoyl group on adenosine at position 37 (t(6)A37) in tRNAs that read codons beginning with adenine. The complex is probably involved in the transfer of the threonylcarbamoyl moiety of threonylcarbamoyl-AMP (TC-AMP) to the N6 group of A37. GON7 plays a supporting role to the catalytic subunit OSGEP in the complex. This chain is EKC/KEOPS complex subunit GON7, found in Sus scrofa (Pig).